A 424-amino-acid chain; its full sequence is Serine--tRNA ligase (424 aa).

Residue 233–235 (TAE) coordinates L-serine. Residue 264-266 (RRE) participates in ATP binding. Residue glutamate 287 coordinates L-serine. Residue 351–354 (EISS) participates in ATP binding. Residue serine 386 participates in L-serine binding.

It belongs to the class-II aminoacyl-tRNA synthetase family. Type-1 seryl-tRNA synthetase subfamily. Homodimer. The tRNA molecule binds across the dimer.

The protein localises to the cytoplasm. The catalysed reaction is tRNA(Ser) + L-serine + ATP = L-seryl-tRNA(Ser) + AMP + diphosphate + H(+). The enzyme catalyses tRNA(Sec) + L-serine + ATP = L-seryl-tRNA(Sec) + AMP + diphosphate + H(+). The protein operates within aminoacyl-tRNA biosynthesis; selenocysteinyl-tRNA(Sec) biosynthesis; L-seryl-tRNA(Sec) from L-serine and tRNA(Sec): step 1/1. Its function is as follows. Catalyzes the attachment of serine to tRNA(Ser). Is also able to aminoacylate tRNA(Sec) with serine, to form the misacylated tRNA L-seryl-tRNA(Sec), which will be further converted into selenocysteinyl-tRNA(Sec). In Pseudothermotoga lettingae (strain ATCC BAA-301 / DSM 14385 / NBRC 107922 / TMO) (Thermotoga lettingae), this protein is Serine--tRNA ligase.